The sequence spans 357 residues: DNA integrity scanning protein DisA (357 aa).

Residues 8-146 (VKSMINILQL…GNLRYTLKDI (139 aa)) form the DAC domain. Residues Gly75, Leu93, and 106–110 (MRHRT) contribute to the ATP site.

It belongs to the DisA family. Homooctamer. The cofactor is Mg(2+).

The enzyme catalyses 2 ATP = 3',3'-c-di-AMP + 2 diphosphate. Its function is as follows. Participates in a DNA-damage check-point that is active prior to asymmetric division when DNA is damaged. DisA forms globular foci that rapidly scan along the chromosomes during sporulation, searching for lesions. When a lesion is present, DisA pauses at the lesion site. This triggers a cellular response that culminates in a temporary block in sporulation initiation. Functionally, also has diadenylate cyclase activity, catalyzing the condensation of 2 ATP molecules into cyclic di-AMP (c-di-AMP). c-di-AMP acts as a signaling molecule that couples DNA integrity with progression of sporulation. The rise in c-di-AMP level generated by DisA while scanning the chromosome, operates as a positive signal that advances sporulation; upon encountering a lesion, the DisA focus arrests at the damaged site and halts c-di-AMP synthesis. The protein is DNA integrity scanning protein DisA of Bacillus mycoides (strain KBAB4) (Bacillus weihenstephanensis).